Here is an 861-residue protein sequence, read N- to C-terminus: Probable beta-glucosidase A (861 aa).

Positions 1–19 are cleaved as a signal peptide; the sequence is MKLGWIEVAALAAASVVSA. N-linked (GlcNAc...) asparagine glycans are attached at residues N62, N212, and N253. D281 is a catalytic residue. N-linked (GlcNAc...) asparagine glycosylation is found at N316, N323, N355, N443, N524, N543, N565, N669, and N713. The tract at residues 730-754 is disordered; that stretch reads DSKYIPEGATDGSAQPRLPASGGAG. An N-linked (GlcNAc...) asparagine glycan is attached at N846.

This sequence belongs to the glycosyl hydrolase 3 family.

It is found in the secreted. It catalyses the reaction Hydrolysis of terminal, non-reducing beta-D-glucosyl residues with release of beta-D-glucose.. The protein operates within glycan metabolism; cellulose degradation. Beta-glucosidases are one of a number of cellulolytic enzymes involved in the degradation of cellulosic biomass. Catalyzes the last step releasing glucose from the inhibitory cellobiose. The polypeptide is Probable beta-glucosidase A (bglA) (Aspergillus oryzae (strain ATCC 42149 / RIB 40) (Yellow koji mold)).